Reading from the N-terminus, the 256-residue chain is Biosynthetic peptidoglycan transglycosylase (256 aa).

The chain crosses the membrane as a helical span at residues 26–48 (VARWLAYAGGVFAGAWLATQLYY).

Belongs to the glycosyltransferase 51 family.

The protein resides in the cell inner membrane. The catalysed reaction is [GlcNAc-(1-&gt;4)-Mur2Ac(oyl-L-Ala-gamma-D-Glu-L-Lys-D-Ala-D-Ala)](n)-di-trans,octa-cis-undecaprenyl diphosphate + beta-D-GlcNAc-(1-&gt;4)-Mur2Ac(oyl-L-Ala-gamma-D-Glu-L-Lys-D-Ala-D-Ala)-di-trans,octa-cis-undecaprenyl diphosphate = [GlcNAc-(1-&gt;4)-Mur2Ac(oyl-L-Ala-gamma-D-Glu-L-Lys-D-Ala-D-Ala)](n+1)-di-trans,octa-cis-undecaprenyl diphosphate + di-trans,octa-cis-undecaprenyl diphosphate + H(+). It participates in cell wall biogenesis; peptidoglycan biosynthesis. Peptidoglycan polymerase that catalyzes glycan chain elongation from lipid-linked precursors. This is Biosynthetic peptidoglycan transglycosylase from Burkholderia thailandensis (strain ATCC 700388 / DSM 13276 / CCUG 48851 / CIP 106301 / E264).